The sequence spans 424 residues: Pachytene checkpoint protein 2 homolog (424 aa).

171–178 (GPPGTGKT) provides a ligand contact to ATP.

This sequence belongs to the AAA ATPase family. PCH2 subfamily.

Functionally, plays a key role in chromosome recombination and chromosome structure development during meiosis. Required at early steps in meiotic recombination that leads to non-crossovers pathways. Also needed for efficient completion of homologous synapsis by influencing crossover distribution along the chromosomes affecting both crossovers and non-crossovers pathways. This Danio rerio (Zebrafish) protein is Pachytene checkpoint protein 2 homolog (trip13).